Consider the following 163-residue polypeptide: SsrA-binding protein (163 aa).

Positions 138–157 (EDRRGAIAERESKREMDRAL) are enriched in basic and acidic residues. The interval 138 to 163 (EDRRGAIAERESKREMDRALARGRRR) is disordered.

It belongs to the SmpB family.

It is found in the cytoplasm. In terms of biological role, required for rescue of stalled ribosomes mediated by trans-translation. Binds to transfer-messenger RNA (tmRNA), required for stable association of tmRNA with ribosomes. tmRNA and SmpB together mimic tRNA shape, replacing the anticodon stem-loop with SmpB. tmRNA is encoded by the ssrA gene; the 2 termini fold to resemble tRNA(Ala) and it encodes a 'tag peptide', a short internal open reading frame. During trans-translation Ala-aminoacylated tmRNA acts like a tRNA, entering the A-site of stalled ribosomes, displacing the stalled mRNA. The ribosome then switches to translate the ORF on the tmRNA; the nascent peptide is terminated with the 'tag peptide' encoded by the tmRNA and targeted for degradation. The ribosome is freed to recommence translation, which seems to be the essential function of trans-translation. This is SsrA-binding protein from Anaeromyxobacter dehalogenans (strain 2CP-1 / ATCC BAA-258).